A 218-amino-acid chain; its full sequence is Interleukin-37 (218 aa).

The tract at residues 1–40 (MSFVGENSGVKMGSEDWEKDEPQCCLEDPAGSPLEPGPSL) is disordered. The propeptide at 1–45 (MSFVGENSGVKMGSEDWEKDEPQCCLEDPAGSPLEPGPSLPTMNF) is removed in mature form. A compositionally biased stretch (basic and acidic residues) spans 13 to 22 (GSEDWEKDEP).

It belongs to the IL-1 family. In terms of assembly, interacts with SMAD3. Binds IL18R1, but not to IL1R1, with lower affinity than IL18, and does not seem to act as a receptor antagonist for IL18. Interacts with cargo receptor TMED10; the interaction mediates the translocation from the cytoplasm into the ERGIC (endoplasmic reticulum-Golgi intermediate compartment) and thereby secretion. In terms of processing, proteolytically converted to the mature form by CASP1. In general, low constitutive expression, if any, in healthy tissues; high expression in inflammatory counterparts, including in synovial tissues from individuals with active rheumatoid arthritis. Isoform A, isoform B and isoform C are expressed in testis, colon, placenta, lung and lymph node. Isoform D and isoform E were found only in testis and bone marrow. Whereas only isoform A is found in brain, only isoform B in kidney and only isoform C in heart.

The protein resides in the cytoplasm. The protein localises to the cytosol. Its subcellular location is the nucleus. It localises to the secreted. Functionally, immune regulatory cytokine that acts as a suppressor of innate inflammatory and immune responses involved in curbing excessive inflammation. Signaling can occur via two mechanisms, intracellularly through nuclear translocation with SMAD3 and extracellularly after secretion and binding to its receptor composed of IL18R1 and IL18RAP. Suppresses, or reduces, pro-inflammatory cytokine production, including IL1A and IL6, as well as CCL12, CSF1, CSF2, CXCL13, IL1B, IL23A and IL1RN, but spares anti-inflammatory cytokines. Inhibits dendritic cell activation. In Homo sapiens (Human), this protein is Interleukin-37.